The sequence spans 254 residues: Ciliary microtubule associated protein 1A (254 aa).

STPGR repeat units follow at residues 180–205 (PGPAAYRQTDVRVTKFKAPQYTMAAR) and 216–241 (PGPGAHSPEKVTLTKPCAPVVTFGIK). Positions 207–226 (EPPGDKTLKPGPGAHSPEKV) are disordered.

Belongs to the CIMAP family. Microtubule inner protein component of sperm flagellar doublet microtubules. In terms of tissue distribution, testis-specific.

It is found in the cytoplasm. The protein resides in the cytoskeleton. The protein localises to the flagellum axoneme. In terms of biological role, outer dense fibers are filamentous structures located on the outside of the axoneme in the midpiece and principal piece of the mammalian sperm tail. May help to maintain the passive elastic structures and elastic recoil of the sperm tail. The sequence is that of Ciliary microtubule associated protein 1A from Homo sapiens (Human).